The primary structure comprises 198 residues: Recombination protein RecR (198 aa).

Residues 58-73 (CSTCGNFTDTDPCALC) form a C4-type zinc finger. The Toprim domain maps to 81–175 (STICVVEQPK…KVTRIAAGIP (95 aa)).

Belongs to the RecR family.

In terms of biological role, may play a role in DNA repair. It seems to be involved in an RecBC-independent recombinational process of DNA repair. It may act with RecF and RecO. The polypeptide is Recombination protein RecR (Clostridium botulinum (strain Alaska E43 / Type E3)).